We begin with the raw amino-acid sequence, 480 residues long: tRNA-2-methylthio-N(6)-dimethylallyladenosine synthase (480 aa).

The MTTase N-terminal domain maps to 32 to 149 (RKLYIRTFGC…LPELIRRRRA (118 aa)). Residues cysteine 41, cysteine 78, cysteine 112, cysteine 186, cysteine 190, and cysteine 193 each coordinate [4Fe-4S] cluster. The 234-residue stretch at 172–405 (RIEGATAFVS…QALINAQAAA (234 aa)) folds into the Radical SAM core domain. A TRAM domain is found at 408–471 (QAMVGTRQRL…PNSLRARVAD (64 aa)).

It belongs to the methylthiotransferase family. MiaB subfamily. In terms of assembly, monomer. [4Fe-4S] cluster serves as cofactor.

It is found in the cytoplasm. The enzyme catalyses N(6)-dimethylallyladenosine(37) in tRNA + (sulfur carrier)-SH + AH2 + 2 S-adenosyl-L-methionine = 2-methylsulfanyl-N(6)-dimethylallyladenosine(37) in tRNA + (sulfur carrier)-H + 5'-deoxyadenosine + L-methionine + A + S-adenosyl-L-homocysteine + 2 H(+). Functionally, catalyzes the methylthiolation of N6-(dimethylallyl)adenosine (i(6)A), leading to the formation of 2-methylthio-N6-(dimethylallyl)adenosine (ms(2)i(6)A) at position 37 in tRNAs that read codons beginning with uridine. This chain is tRNA-2-methylthio-N(6)-dimethylallyladenosine synthase, found in Bordetella petrii (strain ATCC BAA-461 / DSM 12804 / CCUG 43448).